The following is a 141-amino-acid chain: Protein X (141 aa).

The disordered stretch occupies residues 22–52 (GPQSSGPPFPRPAAGSAASSASSPSPSDESD). Residues 33–48 (PAAGSAASSASSPSPS) are compositionally biased toward low complexity. Residues 68 to 113 (PCCLVFTCADLRTMDSTVNFVSWHAKRQLGMPSKDLWTPYIKDQLL) form a mitochondrial targeting sequence region.

Belongs to the orthohepadnavirus protein X family. In terms of assembly, may form homodimer. May interact with host CEBPA, CFLAR, CREB1, DDB1, E4F1, HBXIP, HSPD1/HSP60, NFKBIA, POLR2E and SMAD4. Interacts with host SMC5-SMC6 complex and induces its degradation. Interacts with host TRPC4AP; leading to prevent ubiquitination of TRPC4AP. Interacts with host PLSCR1; this interaction promotes ubiquitination and degradation of HBx and impairs HBx-mediated cell proliferation. Post-translationally, a fraction may be phosphorylated in insect cells and HepG2 cells, a human hepatoblastoma cell line. Phosphorylated in vitro by host protein kinase C or mitogen-activated protein kinase. N-acetylated in insect cells.

The protein localises to the host cytoplasm. It is found in the host nucleus. The protein resides in the host mitochondrion. Functionally, multifunctional protein that plays a role in silencing host antiviral defenses and promoting viral transcription. Does not seem to be essential for HBV infection. May be directly involved in development of cirrhosis and liver cancer (hepatocellular carcinoma). Most of cytosolic activities involve modulation of cytosolic calcium. The effect on apoptosis is controversial depending on the cell types in which the studies have been conducted. May induce apoptosis by localizing in mitochondria and causing loss of mitochondrial membrane potential. May also modulate apoptosis by binding host CFLAR, a key regulator of the death-inducing signaling complex (DISC). Promotes viral transcription by using the host E3 ubiquitin ligase DDB1 to target the SMC5-SMC6 complex to proteasomal degradation. This host complex would otherwise bind to viral episomal DNA, and prevents its transcription. Moderately stimulates transcription of many different viral and cellular transcription elements. Promoters and enhancers stimulated by HBx contain DNA binding sites for NF-kappa-B, AP-1, AP-2, c-EBP, ATF/CREB, or the calcium-activated factor NF-AT. This chain is Protein X, found in Woodchuck hepatitis B virus (isolate w64/pWS23) (WHV).